We begin with the raw amino-acid sequence, 155 residues long: Endoribonuclease YbeY (155 aa).

Residues His-114, His-118, and His-124 each contribute to the Zn(2+) site.

It belongs to the endoribonuclease YbeY family. Requires Zn(2+) as cofactor.

Its subcellular location is the cytoplasm. In terms of biological role, single strand-specific metallo-endoribonuclease involved in late-stage 70S ribosome quality control and in maturation of the 3' terminus of the 16S rRNA. The sequence is that of Endoribonuclease YbeY from Escherichia coli O7:K1 (strain IAI39 / ExPEC).